The sequence spans 247 residues: Adenosylcobinamide-GDP ribazoletransferase (247 aa).

5 consecutive transmembrane segments (helical) span residues 34–54 (IVMF…IFIL), 59–79 (CGIP…TGGF), 113–133 (GGLA…ELAL), 138–158 (MLAA…LLMY), and 187–207 (LAVI…AMVV).

It belongs to the CobS family. Requires Mg(2+) as cofactor.

The protein resides in the cell inner membrane. It carries out the reaction alpha-ribazole + adenosylcob(III)inamide-GDP = adenosylcob(III)alamin + GMP + H(+). The catalysed reaction is alpha-ribazole 5'-phosphate + adenosylcob(III)inamide-GDP = adenosylcob(III)alamin 5'-phosphate + GMP + H(+). It participates in cofactor biosynthesis; adenosylcobalamin biosynthesis; adenosylcobalamin from cob(II)yrinate a,c-diamide: step 7/7. In terms of biological role, joins adenosylcobinamide-GDP and alpha-ribazole to generate adenosylcobalamin (Ado-cobalamin). Also synthesizes adenosylcobalamin 5'-phosphate from adenosylcobinamide-GDP and alpha-ribazole 5'-phosphate. This chain is Adenosylcobinamide-GDP ribazoletransferase, found in Salmonella choleraesuis (strain SC-B67).